The chain runs to 260 residues: Putative ABC transporter substrate-binding lipoprotein YvgL (260 aa).

Positions 1 to 20 are cleaved as a signal peptide; sequence MFKKYSIFIAALTAFLLVAG. Cys-21 carries N-palmitoyl cysteine lipidation. Residue Cys-21 is the site of S-diacylglycerol cysteine attachment. Residues Ser-43, Ser-71, Ala-151, Val-178, and Tyr-196 each contribute to the molybdate site.

The protein belongs to the bacterial solute-binding protein ModA family.

The protein resides in the cell membrane. The sequence is that of Putative ABC transporter substrate-binding lipoprotein YvgL (yvgL) from Bacillus subtilis (strain 168).